Consider the following 462-residue polypeptide: Trigger factor (462 aa).

The PPIase FKBP-type domain maps to Gly-161–Ala-246. A compositionally biased stretch (basic and acidic residues) spans Ser-428–Asp-437. The disordered stretch occupies residues Ser-428–Glu-462. Basic residues predominate over residues Lys-449–Glu-462.

Belongs to the FKBP-type PPIase family. Tig subfamily.

It localises to the cytoplasm. The catalysed reaction is [protein]-peptidylproline (omega=180) = [protein]-peptidylproline (omega=0). Its function is as follows. Involved in protein export. Acts as a chaperone by maintaining the newly synthesized protein in an open conformation. Functions as a peptidyl-prolyl cis-trans isomerase. The sequence is that of Trigger factor from Paramagnetospirillum magneticum (strain ATCC 700264 / AMB-1) (Magnetospirillum magneticum).